The chain runs to 273 residues: Dermonecrotic toxin LapSicTox-alphaIB1c (273 aa).

Residue His-5 is part of the active site. 2 residues coordinate Mg(2+): Glu-25 and Asp-27. Catalysis depends on His-41, which acts as the Nucleophile. 2 disulfide bridges follow: Cys-45–Cys-51 and Cys-47–Cys-190. Asp-85 contributes to the Mg(2+) binding site. Asn-250 carries N-linked (GlcNAc...) asparagine glycosylation.

This sequence belongs to the arthropod phospholipase D family. Class II subfamily. It depends on Mg(2+) as a cofactor. Expressed by the venom gland.

Its subcellular location is the secreted. The enzyme catalyses an N-(acyl)-sphingosylphosphocholine = an N-(acyl)-sphingosyl-1,3-cyclic phosphate + choline. It carries out the reaction an N-(acyl)-sphingosylphosphoethanolamine = an N-(acyl)-sphingosyl-1,3-cyclic phosphate + ethanolamine. The catalysed reaction is a 1-acyl-sn-glycero-3-phosphocholine = a 1-acyl-sn-glycero-2,3-cyclic phosphate + choline. It catalyses the reaction a 1-acyl-sn-glycero-3-phosphoethanolamine = a 1-acyl-sn-glycero-2,3-cyclic phosphate + ethanolamine. In terms of biological role, dermonecrotic toxins cleave the phosphodiester linkage between the phosphate and headgroup of certain phospholipids (sphingolipid and lysolipid substrates), forming an alcohol (often choline) and a cyclic phosphate. This toxin acts on sphingomyelin (SM). It may also act on ceramide phosphoethanolamine (CPE), lysophosphatidylcholine (LPC) and lysophosphatidylethanolamine (LPE), but not on lysophosphatidylserine (LPS), and lysophosphatidylglycerol (LPG). It acts by transphosphatidylation, releasing exclusively cyclic phosphate products as second products. Induces dermonecrosis, hemolysis, increased vascular permeability, edema, inflammatory response, and platelet aggregation. This is Dermonecrotic toxin LapSicTox-alphaIB1c from Loxosceles apachea (Apache recluse spider).